Reading from the N-terminus, the 118-residue chain is Myotrophin (118 aa).

ANK repeat units lie at residues 1 to 30, 34 to 65, and 67 to 98; these read MSDKEFMWALKNGDLDEVKDYVAKGEDVNR, GGRKPLHYAADCGQLEILEFLLLKGADINAPD, and HNITPLLSAVYEGHVSCVKLLLSKGADKTVKG.

This sequence belongs to the myotrophin family.

Its subcellular location is the cytoplasm. The protein resides in the nucleus. It localises to the perinuclear region. Functionally, regulates NF-kappa-B transcription factor activity. Promotes growth of cardiomyocytes, but not cardiomyocyte proliferation. Promotes cardiac muscle hypertrophy. Plays a role in the regulation of the growth of actin filaments. Inhibits the activity of the F-actin-capping protein complex. The chain is Myotrophin (MTPN) from Gallus gallus (Chicken).